The following is a 700-amino-acid chain: Elongation factor G (700 aa).

In terms of domain architecture, tr-type G spans 10 to 286 (TKVRNIGIMA…AVIDYLPSPL (277 aa)). Residues 19–26 (AHIDAGKT), 83–87 (DTPGH), and 137–140 (NKMD) contribute to the GTP site.

This sequence belongs to the TRAFAC class translation factor GTPase superfamily. Classic translation factor GTPase family. EF-G/EF-2 subfamily.

It is found in the cytoplasm. Its function is as follows. Catalyzes the GTP-dependent ribosomal translocation step during translation elongation. During this step, the ribosome changes from the pre-translocational (PRE) to the post-translocational (POST) state as the newly formed A-site-bound peptidyl-tRNA and P-site-bound deacylated tRNA move to the P and E sites, respectively. Catalyzes the coordinated movement of the two tRNA molecules, the mRNA and conformational changes in the ribosome. The sequence is that of Elongation factor G from Kineococcus radiotolerans (strain ATCC BAA-149 / DSM 14245 / SRS30216).